The chain runs to 198 residues: NADH-quinone oxidoreductase subunit C (198 aa).

The protein belongs to the complex I 30 kDa subunit family. In terms of assembly, NDH-1 is composed of 14 different subunits. Subunits NuoB, C, D, E, F, and G constitute the peripheral sector of the complex.

The protein resides in the cell inner membrane. The enzyme catalyses a quinone + NADH + 5 H(+)(in) = a quinol + NAD(+) + 4 H(+)(out). In terms of biological role, NDH-1 shuttles electrons from NADH, via FMN and iron-sulfur (Fe-S) centers, to quinones in the respiratory chain. The immediate electron acceptor for the enzyme in this species is believed to be ubiquinone. Couples the redox reaction to proton translocation (for every two electrons transferred, four hydrogen ions are translocated across the cytoplasmic membrane), and thus conserves the redox energy in a proton gradient. This chain is NADH-quinone oxidoreductase subunit C, found in Herminiimonas arsenicoxydans.